A 491-amino-acid chain; its full sequence is Nuatigenin 3-beta-glucosyltransferase (491 aa).

H20 (proton acceptor) is an active-site residue. H20 lines the an anthocyanidin pocket. D125 acts as the Charge relay in catalysis. UDP-alpha-D-glucose-binding residues include A352, Q354, H369, W372, N373, S374, and E377. An an anthocyanidin-binding site is contributed by A392. UDP-alpha-D-glucose-binding residues include E393 and Q394.

Belongs to the UDP-glycosyltransferase family. Expressed in roots, stems and leaves.

It carries out the reaction nuatigenin + UDP-alpha-D-glucose = nuatigenin 3-beta-D-glucopyranoside + UDP + H(+). The catalysed reaction is diosgenin + UDP-alpha-D-glucose = diosgenin 3-O-beta-D-glucoside + UDP + H(+). The enzyme catalyses tigogenin + UDP-alpha-D-glucose = tigogenin 3-O-beta-D-glucopyranoside + UDP + H(+). It catalyses the reaction solasodine + UDP-alpha-D-glucose = solasodine 3-beta-D-glucoside + UDP + H(+). It carries out the reaction solanidine + UDP-alpha-D-glucose = solanidine 3-O-beta-D-glucopyranoside + UDP + H(+). The catalysed reaction is tomatidine + UDP-alpha-D-glucose = tomatidine 3-O-beta-D-glucopyranoside + UDP + H(+). Glucosyltransferase involved in steroid saponin biosynthesis. Catalyzes the 3-O-glucosylation of steroidal sapogenins, such as diosgenin, nuatigenin and tigogenin. Can glucosylate steroidal alkaloids, such as solanidine, solasodine and tomatidine. The protein is Nuatigenin 3-beta-glucosyltransferase of Solanum aculeatissimum (Dutch eggplant).